A 634-amino-acid chain; its full sequence is Chaperone protein HtpG (634 aa).

An a; substrate-binding region spans residues 1 to 342; sequence MSVETQKETL…SNDLSLNVSR (342 aa). Residues 343 to 559 form a b region; that stretch reads EILQKDPIID…EQDLGLQMRQ (217 aa). The tract at residues 560 to 634 is c; it reads ILEASGQKVP…LNKLLVELSV (75 aa).

This sequence belongs to the heat shock protein 90 family. As to quaternary structure, homodimer.

It localises to the cytoplasm. Its function is as follows. Molecular chaperone. Has ATPase activity. In Pseudomonas fluorescens (strain ATCC BAA-477 / NRRL B-23932 / Pf-5), this protein is Chaperone protein HtpG.